The sequence spans 540 residues: MKEHQCRGGRASPAAPATWLARISVSRGASAIAWTFMLGATAIPVAAQTDDPKLVRHTQSGAVEGVEGDVETFLGIPFAAPPVGDLRWRPPAPPRAWAGTRDGRRFAPDCIGNERLREGSRAAGTSEDCLYLNIWSPKQVGKGGLPVMIWVYGGGFSGGSGAVPYYDGSALAQKGVVVVTFNYRAGILGFLAHPALSKESPNGVSGNYGLLDMLAAFKWVQNNIREFGGDPNRVTVFGESAGASALGLLLTSPLSESAFNQAILQSPGLARPLATLSESEANGLELGADISALRRADAGELTKIAQSRIPMSRQFTKPRPMGPILDGYVLRTLDVDAFAKGAFRKIPVLVGGNADEGRAFTDRLPVKTVLEYRAYLTEQFGDEADAWERCYPANSDADVPAAVARLFGDSQFNNGIELLSAAFAKWRTPLWRYRFTGIPGAGRRPATHGDEIPYVFANLGPSSVSMFGSLEGGAGASDIKLATEMSAAWVSFAVHGVPDQGTKSHWPRFERRGEIMTFGSQVGSGEGLGVSPSKACQPSK.

S240 serves as the catalytic Acyl-ester intermediate. Active-site charge relay system residues include E356 and H448. A disordered region spans residues 521–540 (QVGSGEGLGVSPSKACQPSK).

This sequence belongs to the type-B carboxylesterase/lipase family.

The enzyme catalyses fumonisin B1 + 2 H2O = 2 tricarballylate + (2S,3S,5R,10R,12S,14S,15R,16R)-2-amino-12,16-dimethylicosane-3,5,10,14,15-pentol + 2 H(+). Its function is as follows. Involved in degradation of fumonisin B1. Catalyzes the hydrolysis of fumonisin B1 (FB1) to aminopentol (HFB1). This Sphingopyxis macrogoltabida (Sphingomonas macrogoltabidus) protein is Fumonisin B1 esterase (fumD).